The following is a 228-amino-acid chain: 2,3-bisphosphoglycerate-dependent phosphoglycerate mutase (228 aa).

Residues 8–15 (RHGLSEWN), 21–22 (TG), Arg60, 87–90 (ERHY), Lys98, 114–115 (RR), and 183–184 (GN) contribute to the substrate site. His9 functions as the Tele-phosphohistidine intermediate in the catalytic mechanism. The Proton donor/acceptor role is filled by Glu87.

It belongs to the phosphoglycerate mutase family. BPG-dependent PGAM subfamily.

The enzyme catalyses (2R)-2-phosphoglycerate = (2R)-3-phosphoglycerate. The protein operates within carbohydrate degradation; glycolysis; pyruvate from D-glyceraldehyde 3-phosphate: step 3/5. In terms of biological role, catalyzes the interconversion of 2-phosphoglycerate and 3-phosphoglycerate. The polypeptide is 2,3-bisphosphoglycerate-dependent phosphoglycerate mutase (Enterococcus faecalis (strain ATCC 700802 / V583)).